The chain runs to 181 residues: MFGLKQFYQDEVRAKLAQELDIKNPMLLPKLEKIVISVGAGAHAKDMKIMQNIAQTISLIAGQKAVITKAKKSVAGFKIREGMAVGAKVTLRNKRMYNFLEKLIVISLPRVKDFRGISRNGFDGRGNYTFGINEQLIFPEVVYDDIMVSHGMNITMVTSTDNDKEAFKLLELLGLPFAKVR.

The protein belongs to the universal ribosomal protein uL5 family. As to quaternary structure, part of the 50S ribosomal subunit; part of the 5S rRNA/L5/L18/L25 subcomplex. Contacts the 5S rRNA and the P site tRNA. Forms a bridge to the 30S subunit in the 70S ribosome.

This is one of the proteins that bind and probably mediate the attachment of the 5S RNA into the large ribosomal subunit, where it forms part of the central protuberance. In the 70S ribosome it contacts protein S13 of the 30S subunit (bridge B1b), connecting the 2 subunits; this bridge is implicated in subunit movement. Contacts the P site tRNA; the 5S rRNA and some of its associated proteins might help stabilize positioning of ribosome-bound tRNAs. In Helicobacter pylori (strain G27), this protein is Large ribosomal subunit protein uL5.